The following is a 213-amino-acid chain: NDR1/HIN1-like protein 26 (213 aa).

The Cytoplasmic portion of the chain corresponds to 1–27 (MSQISITSPKHCAKKGGININNRHKKL). The chain crosses the membrane as a helical span at residues 28-48 (FFTFSTFFSGLLLIIFLVWLI). Residues 49 to 213 (LHPERPEFSL…LQGTRCSTTI (165 aa)) lie on the Lumenal side of the membrane. Residues Asn-67, Asn-77, and Asn-195 are each glycosylated (N-linked (GlcNAc...) asparagine).

Expressed in the vasculature of roots, rosette leaves, stems, cauline leaves and flowers. Specifically expressed in phloem.

The protein localises to the cell junction. It localises to the plasmodesma. Its subcellular location is the endoplasmic reticulum membrane. Involved in the regulation of sugar, amino acid and some primary metabolite export from companion cells (CCs) to sieve elements (SEs) in phloem. Required for apoplastic phloem sugar loading in source leaves in order to transport it to sink tissues. Required for correct sugar partitioning between source leaves and sink organs. The sequence is that of NDR1/HIN1-like protein 26 from Arabidopsis thaliana (Mouse-ear cress).